The primary structure comprises 358 residues: Ribosomal RNA large subunit methyltransferase M (358 aa).

S-adenosyl-L-methionine-binding positions include Ser-187, 220 to 223 (CPGG), Asp-239, Asp-259, and Asp-276. Lys-305 functions as the Proton acceptor in the catalytic mechanism.

This sequence belongs to the class I-like SAM-binding methyltransferase superfamily. RNA methyltransferase RlmE family. RlmM subfamily. Monomer.

Its subcellular location is the cytoplasm. It carries out the reaction cytidine(2498) in 23S rRNA + S-adenosyl-L-methionine = 2'-O-methylcytidine(2498) in 23S rRNA + S-adenosyl-L-homocysteine + H(+). Its function is as follows. Catalyzes the 2'-O-methylation at nucleotide C2498 in 23S rRNA. This chain is Ribosomal RNA large subunit methyltransferase M, found in Shewanella woodyi (strain ATCC 51908 / MS32).